The chain runs to 189 residues: Crossover junction endodeoxyribonuclease RuvC (189 aa).

Active-site residues include Asp11, Glu71, and Asp143. Mg(2+) is bound by residues Asp11, Glu71, and Asp143.

This sequence belongs to the RuvC family. Homodimer which binds Holliday junction (HJ) DNA. The HJ becomes 2-fold symmetrical on binding to RuvC with unstacked arms; it has a different conformation from HJ DNA in complex with RuvA. In the full resolvosome a probable DNA-RuvA(4)-RuvB(12)-RuvC(2) complex forms which resolves the HJ. Mg(2+) is required as a cofactor.

The protein resides in the cytoplasm. The enzyme catalyses Endonucleolytic cleavage at a junction such as a reciprocal single-stranded crossover between two homologous DNA duplexes (Holliday junction).. Its function is as follows. The RuvA-RuvB-RuvC complex processes Holliday junction (HJ) DNA during genetic recombination and DNA repair. Endonuclease that resolves HJ intermediates. Cleaves cruciform DNA by making single-stranded nicks across the HJ at symmetrical positions within the homologous arms, yielding a 5'-phosphate and a 3'-hydroxyl group; requires a central core of homology in the junction. The consensus cleavage sequence is 5'-(A/T)TT(C/G)-3'. Cleavage occurs on the 3'-side of the TT dinucleotide at the point of strand exchange. HJ branch migration catalyzed by RuvA-RuvB allows RuvC to scan DNA until it finds its consensus sequence, where it cleaves and resolves the cruciform DNA. The protein is Crossover junction endodeoxyribonuclease RuvC of Methylorubrum populi (strain ATCC BAA-705 / NCIMB 13946 / BJ001) (Methylobacterium populi).